A 296-amino-acid chain; its full sequence is Ribosomal RNA small subunit methyltransferase A (296 aa).

Residues Asn30, Leu32, Gly57, Glu78, Asp103, and Asn128 each contribute to the S-adenosyl-L-methionine site.

It belongs to the class I-like SAM-binding methyltransferase superfamily. rRNA adenine N(6)-methyltransferase family. RsmA subfamily.

It localises to the cytoplasm. The enzyme catalyses adenosine(1518)/adenosine(1519) in 16S rRNA + 4 S-adenosyl-L-methionine = N(6)-dimethyladenosine(1518)/N(6)-dimethyladenosine(1519) in 16S rRNA + 4 S-adenosyl-L-homocysteine + 4 H(+). Its function is as follows. Specifically dimethylates two adjacent adenosines (A1518 and A1519) in the loop of a conserved hairpin near the 3'-end of 16S rRNA in the 30S particle. May play a critical role in biogenesis of 30S subunits. In Staphylococcus carnosus (strain TM300), this protein is Ribosomal RNA small subunit methyltransferase A.